Here is a 540-residue protein sequence, read N- to C-terminus: Chaperonin GroEL (540 aa).

Residues 30–33, Lys51, 87–91, Gly415, 479–481, and Asp495 contribute to the ATP site; these read TLGP, DGTTT, and NAA.

It belongs to the chaperonin (HSP60) family. As to quaternary structure, forms a cylinder of 14 subunits composed of two heptameric rings stacked back-to-back. Interacts with the co-chaperonin GroES.

It is found in the cytoplasm. It carries out the reaction ATP + H2O + a folded polypeptide = ADP + phosphate + an unfolded polypeptide.. Functionally, together with its co-chaperonin GroES, plays an essential role in assisting protein folding. The GroEL-GroES system forms a nano-cage that allows encapsulation of the non-native substrate proteins and provides a physical environment optimized to promote and accelerate protein folding. In Pluralibacter gergoviae (Enterobacter gergoviae), this protein is Chaperonin GroEL.